Consider the following 231-residue polypeptide: Dihydropteridine reductase (231 aa).

6-30 (LVLGGSGALGAEVVKFFKSKSWNTI) provides a ligand contact to NADP(+). Catalysis depends on Tyr138, which acts as the Proton acceptor.

The protein belongs to the short-chain dehydrogenases/reductases (SDR) family. In terms of assembly, homodimer.

It carries out the reaction 5,6,7,8-tetrahydropteridine + NAD(+) = 6,7-dihydropteridine + NADH + H(+). The enzyme catalyses 5,6,7,8-tetrahydropteridine + NADP(+) = 6,7-dihydropteridine + NADPH + H(+). Its function is as follows. The product of this enzyme, tetrahydrobiopterin (BH-4), is an essential cofactor for phenylalanine, tyrosine, and tryptophan hydroxylases. The chain is Dihydropteridine reductase (qdpr) from Dictyostelium discoideum (Social amoeba).